A 287-amino-acid chain; its full sequence is Orotidine 5'-phosphate decarboxylase (287 aa).

K99 acts as the Proton donor in catalysis.

This sequence belongs to the OMP decarboxylase family. Type 2 subfamily.

The enzyme catalyses orotidine 5'-phosphate + H(+) = UMP + CO2. The protein operates within pyrimidine metabolism; UMP biosynthesis via de novo pathway; UMP from orotate: step 2/2. The chain is Orotidine 5'-phosphate decarboxylase from Clostridium novyi (strain NT).